Consider the following 246-residue polypeptide: tRNA (guanine-N(7)-)-methyltransferase (246 aa).

The interval 1–26 is disordered; it reads MIENPSPSAANLPEHPSTDASHPRNI. S-adenosyl-L-methionine contacts are provided by Glu-75, Glu-100, Asp-127, and Asp-150. Asp-150 is a catalytic residue. Lys-154 provides a ligand contact to substrate. Residues 156-161 form an interaction with RNA region; the sequence is KHNKRR. Substrate is bound by residues Asp-186 and 225 to 228; that span reads TKFE.

It belongs to the class I-like SAM-binding methyltransferase superfamily. TrmB family.

It catalyses the reaction guanosine(46) in tRNA + S-adenosyl-L-methionine = N(7)-methylguanosine(46) in tRNA + S-adenosyl-L-homocysteine. Its pathway is tRNA modification; N(7)-methylguanine-tRNA biosynthesis. Its function is as follows. Catalyzes the formation of N(7)-methylguanine at position 46 (m7G46) in tRNA. This chain is tRNA (guanine-N(7)-)-methyltransferase, found in Polaromonas sp. (strain JS666 / ATCC BAA-500).